The sequence spans 878 residues: Alanine--tRNA ligase (878 aa).

Zn(2+) contacts are provided by H568, H572, C669, and H673.

This sequence belongs to the class-II aminoacyl-tRNA synthetase family. It depends on Zn(2+) as a cofactor.

The protein localises to the cytoplasm. The enzyme catalyses tRNA(Ala) + L-alanine + ATP = L-alanyl-tRNA(Ala) + AMP + diphosphate. Its function is as follows. Catalyzes the attachment of alanine to tRNA(Ala) in a two-step reaction: alanine is first activated by ATP to form Ala-AMP and then transferred to the acceptor end of tRNA(Ala). Also edits incorrectly charged Ser-tRNA(Ala) and Gly-tRNA(Ala) via its editing domain. The sequence is that of Alanine--tRNA ligase from Polaromonas sp. (strain JS666 / ATCC BAA-500).